We begin with the raw amino-acid sequence, 1146 residues long: Myosin heavy chain kinase A (1146 aa).

Positions 1–25 (MFNIKKRKESITGIPPINVNSPQSV) are disordered. Residues 100–120 (EQMEDQLEKTMKVVRNHTDSL) are a coiled coil. The interval 158–191 (IQEKKSTSSPLVKGGISGGGGSGGDDSFDGANIS) is disordered. Gly residues predominate over residues 172–181 (GISGGGGSGG). Coiled-coil stretches lie at residues 187-241 (GANI…KRIE) and 297-502 (SKIE…ASIS). The interval 500-551 (SISPISSVPKSPITTKRSSIILNSPPMTSQQSSPKIQDLLSSSGSSSVSGIN) is pseudosubstrate/autoinhibitory domain. Positions 521-534 (LNSPPMTSQQSSPK) are enriched in polar residues. A disordered region spans residues 521–540 (LNSPPMTSQQSSPKIQDLLS). The interval 552 to 852 (ISSETGEMGI…KVGAKQLPKA (301 aa)) is catalytic. One can recognise an Alpha-type protein kinase domain in the interval 564–808 (EFDPIINKWI…VCALLDLDVK (245 aa)). 778 to 783 (GLGNLG) is a binding site for ATP. 7 WD repeats span residues 867–897 (SFRE…RVFD), 910–938 (GHRK…KVHI), 952–980 (GHTG…KVWD), 993–1021 (VHTK…YVWD), 1033–1061 (GHED…KIWD), 1073–1101 (GHWN…KVWD), and 1114–1142 (SHSL…KVWE).

The protein belongs to the protein kinase superfamily. Alpha-type protein kinase family. ALPK subfamily. As to quaternary structure, oligomer. Mg(2+) is required as a cofactor. The cofactor is Mn(2+). Post-translationally, the N-terminus is blocked.

It carries out the reaction L-threonyl-[myosin heavy-chain] + ATP = O-phospho-L-threonyl-[myosin heavy-chain] + ADP + H(+). In terms of biological role, catalyzes its autophosphorylation, which is needed for enzymatic activity and phosphorylates myosin II heavy chain at a threonine in the C-terminal tail region. This phosphorylation is critical for regulating the assembly and disassembly of myosin II filament, affecting myosin localization during an array of cellular contractile events, including cytokinesis and capping of cell surface receptors as well as chemotactic cell locomotion. The chain is Myosin heavy chain kinase A (mhkA) from Dictyostelium discoideum (Social amoeba).